The following is a 67-amino-acid chain: COP9 signalosome complex subunit 9 homolog (67 aa).

Residues 1-31 (MKPSLAADEMFSEGPGYMEMDESGGATGMMM) are disordered.

The protein belongs to the CSN9 family. As to quaternary structure, probable component of the COP9 signalosome (CSN) complex.

In terms of biological role, component of the COP9 signalosome complex (CSN), a complex involved in various cellular and developmental processes. The CSN complex is an essential regulator of the ubiquitin (Ubl) conjugation pathway by mediating the deneddylation of the cullin subunits of SCF-type E3 ligase complexes, leading to decrease the Ubl ligase activity. The polypeptide is COP9 signalosome complex subunit 9 homolog (Drosophila melanogaster (Fruit fly)).